Reading from the N-terminus, the 283-residue chain is MIIDRLYENVEKKGCVCVGLDTDISYLPKGFLNKFTNIEDAIFAFNQRIVDSTFDVSACYKVQIAYYEAMGIKGMILYNKTLEYIRKKGGIVIADIKRGDISATAKMYAKAHFEGDFESDFITLNPYMGMDTLEPYKDYFKNKEKGVFLLLRTSNEGSKDIQYLDLKDNKKVYNKVGEKIENIGKEFLGNCGYSSIGAVVGCTAEENNIRKELKHTFFLIPGYGAQGGKAEVAKSYLSEGNGGIINSSRGILLAYKKYDEEGKNFEECARNEVINMKKTLQII.

The Proton donor role is filled by Lys-97.

It belongs to the OMP decarboxylase family. Type 2 subfamily.

The enzyme catalyses orotidine 5'-phosphate + H(+) = UMP + CO2. The protein operates within pyrimidine metabolism; UMP biosynthesis via de novo pathway; UMP from orotate: step 2/2. In Clostridium botulinum (strain Loch Maree / Type A3), this protein is Orotidine 5'-phosphate decarboxylase.